The following is a 150-amino-acid chain: Large ribosomal subunit protein bL9 (150 aa).

It belongs to the bacterial ribosomal protein bL9 family.

Binds to the 23S rRNA. This chain is Large ribosomal subunit protein bL9, found in Polaromonas sp. (strain JS666 / ATCC BAA-500).